The sequence spans 710 residues: Polyribonucleotide nucleotidyltransferase (710 aa).

2 residues coordinate Mg(2+): Asp-489 and Asp-495. One can recognise a KH domain in the interval 556–615 (PKIDTIKIDVDKIKVVIGKGGETIDKIIAETGVKIDIDDEGNVSIYSSDQAAINRTKEII). Residues 625–693 (GEVYHAKVVR…EKGRVDASMK (69 aa)) enclose the S1 motif domain. The disordered stretch occupies residues 691 to 710 (SMKALIPRPPKPEKKEEKHD). The span at 700–710 (PKPEKKEEKHD) shows a compositional bias: basic and acidic residues.

Mg(2+) serves as cofactor.

It is found in the cytoplasm. The catalysed reaction is RNA(n+1) + phosphate = RNA(n) + a ribonucleoside 5'-diphosphate. In terms of biological role, involved in mRNA degradation. Catalyzes the phosphorolysis of single-stranded polyribonucleotides processively in the 3'- to 5'-direction. The sequence is that of Polyribonucleotide nucleotidyltransferase from Streptococcus pyogenes serotype M6 (strain ATCC BAA-946 / MGAS10394).